The sequence spans 283 residues: Phosphatidylglycerol--prolipoprotein diacylglyceryl transferase (283 aa).

7 helical membrane-spanning segments follow: residues 21-41 (IEVHWYGLAYACAIVIAFYMA), 62-82 (YFLWAELGIVLGARIGYILIY), 106-126 (FIGIRGMSYHGGLVGFLIASY), 136-156 (LLIYLDLIAISLPLGYVFGRI), 190-210 (PSQLIEAFLEGVIVFLMVMWA), 218-238 (GLLIVVYGLGYSLMRFIAEFY), and 252-272 (LSMGQILSLFMVIVSLGILLY). R155 is a binding site for a 1,2-diacyl-sn-glycero-3-phospho-(1'-sn-glycerol).

The protein belongs to the Lgt family.

The protein localises to the cell inner membrane. It catalyses the reaction L-cysteinyl-[prolipoprotein] + a 1,2-diacyl-sn-glycero-3-phospho-(1'-sn-glycerol) = an S-1,2-diacyl-sn-glyceryl-L-cysteinyl-[prolipoprotein] + sn-glycerol 1-phosphate + H(+). Its pathway is protein modification; lipoprotein biosynthesis (diacylglyceryl transfer). In terms of biological role, catalyzes the transfer of the diacylglyceryl group from phosphatidylglycerol to the sulfhydryl group of the N-terminal cysteine of a prolipoprotein, the first step in the formation of mature lipoproteins. This Helicobacter acinonychis (strain Sheeba) protein is Phosphatidylglycerol--prolipoprotein diacylglyceryl transferase.